The chain runs to 539 residues: Chaperone Ric-8A (539 aa).

The disordered stretch occupies residues 507-539; the sequence is MGITPSGNLAPMENAIRDMADERSSSDSDLGLD. Residues 521-532 show a composition bias toward basic and acidic residues; sequence AIRDMADERSSS.

Belongs to the synembryn family.

It is found in the cytoplasm. Its subcellular location is the cell cortex. Its function is as follows. Chaperone that specifically binds and folds nascent G alpha proteins prior to G protein heterotrimer formation, promoting their stability and activity: folds GNAI1, GNAO1, GNA13 and GNAQ. Does not fold G(s) G-alpha proteins GNAS nor GNAL. Also acts as a guanine nucleotide exchange factor (GEF) for G alpha proteins by stimulating exchange of bound GDP for free GTP. The sequence is that of Chaperone Ric-8A (RIC8A) from Gallus gallus (Chicken).